Reading from the N-terminus, the 886-residue chain is Alanine--tRNA ligase (886 aa).

Positions 564, 568, 676, and 680 each coordinate Zn(2+).

Belongs to the class-II aminoacyl-tRNA synthetase family. Zn(2+) is required as a cofactor.

It is found in the cytoplasm. The enzyme catalyses tRNA(Ala) + L-alanine + ATP = L-alanyl-tRNA(Ala) + AMP + diphosphate. Catalyzes the attachment of alanine to tRNA(Ala) in a two-step reaction: alanine is first activated by ATP to form Ala-AMP and then transferred to the acceptor end of tRNA(Ala). Also edits incorrectly charged Ser-tRNA(Ala) and Gly-tRNA(Ala) via its editing domain. In Bartonella bacilliformis (strain ATCC 35685 / KC583 / Herrer 020/F12,63), this protein is Alanine--tRNA ligase.